A 36-amino-acid chain; its full sequence is Photosystem I reaction center subunit VIII (36 aa).

A helical transmembrane segment spans residues 4-24 (FSLPSILVPLVGLVLPAIAMA).

The protein belongs to the PsaI family.

Its subcellular location is the plastid. It localises to the chloroplast thylakoid membrane. In terms of biological role, may help in the organization of the PsaL subunit. The polypeptide is Photosystem I reaction center subunit VIII (Piper cenocladum (Ant piper)).